Consider the following 153-residue polypeptide: Ribonuclease 2 (153 aa).

This sequence belongs to the BetVI family.

It is found in the cytoplasm. In terms of biological role, catalyzes the two-stage endonucleolytic cleavage to 3'-phosphomononucleotides and 3'-phosphooligonucleotides with 2',3'-cyclic phosphate intermediates. The protein is Ribonuclease 2 of Panax ginseng (Korean ginseng).